Reading from the N-terminus, the 745-residue chain is Eukaryotic translation initiation factor 3 subunit B (745 aa).

The 89-residue stretch at 41 to 129 (DVIVIEGVPV…HRFSVHRFTD (89 aa)) folds into the RRM domain. 4 WD repeats span residues 189–230 (EHSR…RFMR), 251–293 (WSHE…RSFP), 303–344 (GQLK…LLEK), and 580–625 (GEHY…LQKH). Positions 644-745 (GKDEQKRVRK…IIEETEEVLA (102 aa)) form a coiled coil.

This sequence belongs to the eIF-3 subunit B family. As to quaternary structure, component of the eukaryotic translation initiation factor 3 (eIF-3) complex.

The protein localises to the cytoplasm. RNA-binding component of the eukaryotic translation initiation factor 3 (eIF-3) complex, which is involved in protein synthesis of a specialized repertoire of mRNAs and, together with other initiation factors, stimulates binding of mRNA and methionyl-tRNAi to the 40S ribosome. The eIF-3 complex specifically targets and initiates translation of a subset of mRNAs involved in cell proliferation. The chain is Eukaryotic translation initiation factor 3 subunit B from Mycosarcoma maydis (Corn smut fungus).